A 279-amino-acid chain; its full sequence is MAVKRIKNHSSGKRQTVVVDYKSILTTSKPEKSLLVTLPKKAGRNNQGKITIRHHGGGHKRKYRIIDFKRNKDNIYGTIKSIEYDPNRTSFISLVVYADGEKRYIIAPKGIKVGDKIISGNENIDILLGNSLPLEFIPEGTLVHNIELSPNAGGQITRSAGASAQILGFDETKKYILVKLNSGEVRKFRKECRATIGTVSNDEHILENLGKAGKSRHLGVRPTVRGSAMNPNDHPHGGGEGRSPVGMDAPRTPWGKRHMGVKTRNNKKSSTSMIVRRRK.

The disordered stretch occupies residues 223–279; that stretch reads TVRGSAMNPNDHPHGGGEGRSPVGMDAPRTPWGKRHMGVKTRNNKKSSTSMIVRRRK. Residues 254–267 are compositionally biased toward basic residues; it reads WGKRHMGVKTRNNK.

The protein belongs to the universal ribosomal protein uL2 family. In terms of assembly, part of the 50S ribosomal subunit. Forms a bridge to the 30S subunit in the 70S ribosome.

Functionally, one of the primary rRNA binding proteins. Required for association of the 30S and 50S subunits to form the 70S ribosome, for tRNA binding and peptide bond formation. It has been suggested to have peptidyltransferase activity; this is somewhat controversial. Makes several contacts with the 16S rRNA in the 70S ribosome. The polypeptide is Large ribosomal subunit protein uL2 (Ureaplasma parvum serovar 3 (strain ATCC 27815 / 27 / NCTC 11736)).